We begin with the raw amino-acid sequence, 186 residues long: UPF0200 protein PH1008 (186 aa).

7–14 is a binding site for ATP; sequence GMPGSGKG.

The protein belongs to the UPF0200 family.

The sequence is that of UPF0200 protein PH1008 from Pyrococcus horikoshii (strain ATCC 700860 / DSM 12428 / JCM 9974 / NBRC 100139 / OT-3).